The following is a 279-amino-acid chain: MAIRKYRPTTPGRRGSSVADFAEITRSTPEKSLLAPLPKKGGRNAHGRITTRHQGGGHKRQYRIIDFKRVDKDGVPAKVAHIEYDPNRTARIALLHFLDGEKRYIVAPKDLKQGDIVESGPGADIKPGNNLPLRNIPVGTTIHNVELRPGGGAKLARSAGVGIQLLGREGAYATLRMPSGEIRRVDVRCRASIGEIGNADQSNINWGKAGRMRWKGKRPTVRGVAMNPVDHPHGGGEGKTSGGRHPVNPQGKPEGRTRRKGQPSDRLIVRRRYATRKRG.

Disordered stretches follow at residues 33 to 58 (LLAP…GGGH) and 223 to 279 (GVAM…RKRG). 2 stretches are compositionally biased toward basic residues: residues 40-58 (KGGR…GGGH) and 269-279 (VRRRYATRKRG).

The protein belongs to the universal ribosomal protein uL2 family. In terms of assembly, part of the 50S ribosomal subunit. Forms a bridge to the 30S subunit in the 70S ribosome.

Functionally, one of the primary rRNA binding proteins. Required for association of the 30S and 50S subunits to form the 70S ribosome, for tRNA binding and peptide bond formation. It has been suggested to have peptidyltransferase activity; this is somewhat controversial. Makes several contacts with the 16S rRNA in the 70S ribosome. In Salinispora arenicola (strain CNS-205), this protein is Large ribosomal subunit protein uL2.